Consider the following 295-residue polypeptide: 4-hydroxy-tetrahydrodipicolinate synthase (295 aa).

A pyruvate-binding site is contributed by Thr-48. Tyr-135 serves as the catalytic Proton donor/acceptor. Lys-163 acts as the Schiff-base intermediate with substrate in catalysis. Val-204 contacts pyruvate.

Belongs to the DapA family. In terms of assembly, homotetramer; dimer of dimers.

It is found in the cytoplasm. The enzyme catalyses L-aspartate 4-semialdehyde + pyruvate = (2S,4S)-4-hydroxy-2,3,4,5-tetrahydrodipicolinate + H2O + H(+). It functions in the pathway amino-acid biosynthesis; L-lysine biosynthesis via DAP pathway; (S)-tetrahydrodipicolinate from L-aspartate: step 3/4. Catalyzes the condensation of (S)-aspartate-beta-semialdehyde [(S)-ASA] and pyruvate to 4-hydroxy-tetrahydrodipicolinate (HTPA). The chain is 4-hydroxy-tetrahydrodipicolinate synthase from Francisella tularensis subsp. novicida (strain U112).